The primary structure comprises 335 residues: POU domain, class 5, transcription factor 2 (335 aa).

The segment at 1-23 (MAGRRSSNVCPFPGNSGGGLEGP) is disordered. In terms of domain architecture, POU-specific spans 113-187 (DVSAIQKEME…LLKMWLEEVD (75 aa)). A DNA-binding region (homeobox) is located at residues 205–264 (RKRRRASRERRIGSNLEKLFLQCPEPTPQQISYIAGRLRLQKDLVQVWFSNRSQMAGWPT).

It belongs to the POU transcription factor family. Class-5 subfamily. Highly restricted to adult testis.

It localises to the nucleus. Transcription factor that binds preferentially to the octamer motif (5'-ATGTTAAT-3'). May exert a regulatory function in meiotic events that are required for terminal differentiation of male germ cell. The protein is POU domain, class 5, transcription factor 2 (Pou5f2) of Rattus norvegicus (Rat).